Consider the following 250-residue polypeptide: Probable transcriptional regulatory protein RHA1_ro06891 (250 aa).

This sequence belongs to the TACO1 family.

Its subcellular location is the cytoplasm. The chain is Probable transcriptional regulatory protein RHA1_ro06891 from Rhodococcus jostii (strain RHA1).